The chain runs to 312 residues: Homoserine O-acetyltransferase (312 aa).

C142 acts as the Acyl-thioester intermediate in catalysis. Substrate-binding residues include K163 and S192. Residue H235 is the Proton acceptor of the active site. E237 is an active-site residue. R249 lines the substrate pocket.

This sequence belongs to the MetA family.

It localises to the cytoplasm. It carries out the reaction L-homoserine + acetyl-CoA = O-acetyl-L-homoserine + CoA. It participates in amino-acid biosynthesis; L-methionine biosynthesis via de novo pathway; O-acetyl-L-homoserine from L-homoserine: step 1/1. Its function is as follows. Transfers an acetyl group from acetyl-CoA to L-homoserine, forming acetyl-L-homoserine. The polypeptide is Homoserine O-acetyltransferase (Ruegeria pomeroyi (strain ATCC 700808 / DSM 15171 / DSS-3) (Silicibacter pomeroyi)).